Reading from the N-terminus, the 488-residue chain is Protein unzipped (488 aa).

The signal sequence occupies residues 1-21 (MTSNSCLISLGLLLVLIQILA). At 22–465 (PAKAAEHSVF…DVALAGFGVN (444 aa)) the chain is on the extracellular side. 4 N-linked (GlcNAc...) asparagine glycosylation sites follow: Asn-35, Asn-232, Asn-317, and Asn-374. Residues 380–400 (TTTTTTTTSTSTTTHATTTST) show a composition bias toward low complexity. The tract at residues 380-453 (TTTTTTTTST…EAPENMSSDP (74 aa)) is disordered. The N-linked (GlcNAc...) asparagine glycan is linked to Asn-448. A helical transmembrane segment spans residues 466–486 (AAGSTFIAGSALLTLLLTIFL). The Cytoplasmic segment spans residues 487 to 488 (SL).

Its subcellular location is the membrane. Required for normal axon patterning during neurogenesis. This Drosophila melanogaster (Fruit fly) protein is Protein unzipped (uzip).